The sequence spans 380 residues: O-phospho-L-seryl-tRNA:Cys-tRNA synthase (380 aa).

Residues 86-87 (AR), Asn192, and 215-217 (SGH) contribute to the pyridoxal 5'-phosphate site. An N6-(pyridoxal phosphate)lysine modification is found at Lys218.

Belongs to the SepCysS family. As to quaternary structure, homodimer. Interacts with SepRS. It depends on pyridoxal 5'-phosphate as a cofactor.

The catalysed reaction is O-phospho-L-seryl-tRNA(Cys) + hydrogen sulfide + H(+) = L-cysteinyl-tRNA(Cys) + phosphate. Converts O-phospho-L-seryl-tRNA(Cys) (Sep-tRNA(Cys)) to L-cysteinyl-tRNA(Cys) (Cys-tRNA(Cys)). The protein is O-phospho-L-seryl-tRNA:Cys-tRNA synthase of Methanococcus maripaludis (strain C5 / ATCC BAA-1333).